The following is a 115-amino-acid chain: Large ribosomal subunit protein uL24 (115 aa).

This sequence belongs to the universal ribosomal protein uL24 family. In terms of assembly, part of the 50S ribosomal subunit.

Functionally, one of two assembly initiator proteins, it binds directly to the 5'-end of the 23S rRNA, where it nucleates assembly of the 50S subunit. One of the proteins that surrounds the polypeptide exit tunnel on the outside of the subunit. The polypeptide is Large ribosomal subunit protein uL24 (Aster yellows witches'-broom phytoplasma (strain AYWB)).